We begin with the raw amino-acid sequence, 203 residues long: High-molecular weight cobalt-containing nitrile hydratase subunit alpha (203 aa).

Co(3+) contacts are provided by C102, C105, S106, and C107.

The protein belongs to the nitrile hydratase subunit alpha family. In terms of assembly, heterodimer of an alpha and a beta chain. The cofactor is Co(3+).

The catalysed reaction is an aliphatic primary amide = an aliphatic nitrile + H2O. NHase catalyzes the hydration of various nitrile compounds to the corresponding amides. This chain is High-molecular weight cobalt-containing nitrile hydratase subunit alpha (nhhA), found in Rhodococcus rhodochrous.